The sequence spans 218 residues: Probable transaldolase (218 aa).

Lysine 84 serves as the catalytic Schiff-base intermediate with substrate.

The protein belongs to the transaldolase family. Type 3B subfamily.

The protein localises to the cytoplasm. The catalysed reaction is D-sedoheptulose 7-phosphate + D-glyceraldehyde 3-phosphate = D-erythrose 4-phosphate + beta-D-fructose 6-phosphate. Its pathway is carbohydrate degradation; pentose phosphate pathway; D-glyceraldehyde 3-phosphate and beta-D-fructose 6-phosphate from D-ribose 5-phosphate and D-xylulose 5-phosphate (non-oxidative stage): step 2/3. Functionally, transaldolase is important for the balance of metabolites in the pentose-phosphate pathway. The polypeptide is Probable transaldolase (Sulfurihydrogenibium sp. (strain YO3AOP1)).